The sequence spans 602 residues: Arginine--tRNA ligase (602 aa).

Positions 132 to 142 match the 'HIGH' region motif; sequence ANPTGPLHVGH.

The protein belongs to the class-I aminoacyl-tRNA synthetase family. Monomer.

The protein localises to the cytoplasm. The enzyme catalyses tRNA(Arg) + L-arginine + ATP = L-arginyl-tRNA(Arg) + AMP + diphosphate. This chain is Arginine--tRNA ligase, found in Cupriavidus metallidurans (strain ATCC 43123 / DSM 2839 / NBRC 102507 / CH34) (Ralstonia metallidurans).